Here is a 171-residue protein sequence, read N- to C-terminus: Serine acetyltransferase (171 aa).

The protein belongs to the transferase hexapeptide repeat family.

It is found in the cytoplasm. The enzyme catalyses L-serine + acetyl-CoA = O-acetyl-L-serine + CoA. The protein operates within amino-acid biosynthesis; L-cysteine biosynthesis; L-cysteine from L-serine: step 1/2. The chain is Serine acetyltransferase (cysE) from Helicobacter pylori (strain ATCC 700392 / 26695) (Campylobacter pylori).